The chain runs to 322 residues: Lipoyl synthase (322 aa).

Residues 1–14 (MKTLDENQAPSRQT) show a composition bias toward polar residues. The tract at residues 1–30 (MKTLDENQAPSRQTPESHRRGAEKLSRIPV) is disordered. Residues 15–26 (PESHRRGAEKLS) show a composition bias toward basic and acidic residues. [4Fe-4S] cluster-binding residues include Cys-70, Cys-75, Cys-81, Cys-96, Cys-100, Cys-103, and Ser-310. The 218-residue stretch at 82–299 (FGHGTATFMI…AGYARELGFA (218 aa)) folds into the Radical SAM core domain.

This sequence belongs to the radical SAM superfamily. Lipoyl synthase family. The cofactor is [4Fe-4S] cluster.

Its subcellular location is the cytoplasm. It carries out the reaction [[Fe-S] cluster scaffold protein carrying a second [4Fe-4S](2+) cluster] + N(6)-octanoyl-L-lysyl-[protein] + 2 oxidized [2Fe-2S]-[ferredoxin] + 2 S-adenosyl-L-methionine + 4 H(+) = [[Fe-S] cluster scaffold protein] + N(6)-[(R)-dihydrolipoyl]-L-lysyl-[protein] + 4 Fe(3+) + 2 hydrogen sulfide + 2 5'-deoxyadenosine + 2 L-methionine + 2 reduced [2Fe-2S]-[ferredoxin]. It functions in the pathway protein modification; protein lipoylation via endogenous pathway; protein N(6)-(lipoyl)lysine from octanoyl-[acyl-carrier-protein]: step 2/2. Catalyzes the radical-mediated insertion of two sulfur atoms into the C-6 and C-8 positions of the octanoyl moiety bound to the lipoyl domains of lipoate-dependent enzymes, thereby converting the octanoylated domains into lipoylated derivatives. The protein is Lipoyl synthase of Methylococcus capsulatus (strain ATCC 33009 / NCIMB 11132 / Bath).